The primary structure comprises 558 residues: Dihydroxy-acid dehydratase (558 aa).

Cysteine 50 serves as a coordination point for [2Fe-2S] cluster. Aspartate 82 lines the Mg(2+) pocket. Residue cysteine 123 participates in [2Fe-2S] cluster binding. Positions 124 and 125 each coordinate Mg(2+). Lysine 125 carries the N6-carboxylysine modification. Cysteine 195 provides a ligand contact to [2Fe-2S] cluster. Glutamate 447 provides a ligand contact to Mg(2+). Catalysis depends on serine 472, which acts as the Proton acceptor.

It belongs to the IlvD/Edd family. Homodimer. [2Fe-2S] cluster serves as cofactor. The cofactor is Mg(2+).

It catalyses the reaction (2R)-2,3-dihydroxy-3-methylbutanoate = 3-methyl-2-oxobutanoate + H2O. It carries out the reaction (2R,3R)-2,3-dihydroxy-3-methylpentanoate = (S)-3-methyl-2-oxopentanoate + H2O. Its pathway is amino-acid biosynthesis; L-isoleucine biosynthesis; L-isoleucine from 2-oxobutanoate: step 3/4. The protein operates within amino-acid biosynthesis; L-valine biosynthesis; L-valine from pyruvate: step 3/4. In terms of biological role, functions in the biosynthesis of branched-chain amino acids. Catalyzes the dehydration of (2R,3R)-2,3-dihydroxy-3-methylpentanoate (2,3-dihydroxy-3-methylvalerate) into 2-oxo-3-methylpentanoate (2-oxo-3-methylvalerate) and of (2R)-2,3-dihydroxy-3-methylbutanoate (2,3-dihydroxyisovalerate) into 2-oxo-3-methylbutanoate (2-oxoisovalerate), the penultimate precursor to L-isoleucine and L-valine, respectively. The polypeptide is Dihydroxy-acid dehydratase (Saccharolobus islandicus (strain Y.N.15.51 / Yellowstone #2) (Sulfolobus islandicus)).